The primary structure comprises 397 residues: Chorismate synthase (397 aa).

The NADP(+) site is built by arginine 40 and arginine 46. FMN-binding positions include 129–131 (RSS), 257–258 (QA), glycine 302, 317–321 (KPISS), and arginine 343.

This sequence belongs to the chorismate synthase family. Homotetramer. FMNH2 is required as a cofactor.

The enzyme catalyses 5-O-(1-carboxyvinyl)-3-phosphoshikimate = chorismate + phosphate. It functions in the pathway metabolic intermediate biosynthesis; chorismate biosynthesis; chorismate from D-erythrose 4-phosphate and phosphoenolpyruvate: step 7/7. In terms of biological role, catalyzes the anti-1,4-elimination of the C-3 phosphate and the C-6 proR hydrogen from 5-enolpyruvylshikimate-3-phosphate (EPSP) to yield chorismate, which is the branch point compound that serves as the starting substrate for the three terminal pathways of aromatic amino acid biosynthesis. This reaction introduces a second double bond into the aromatic ring system. This Chlorobium luteolum (strain DSM 273 / BCRC 81028 / 2530) (Pelodictyon luteolum) protein is Chorismate synthase.